A 199-amino-acid polypeptide reads, in one-letter code: NAD(P)H dehydrogenase (quinone) (199 aa).

One can recognise a Flavodoxin-like domain in the interval 4–190; sequence ILVLYYSMYG…AIARFQGEHV (187 aa). FMN contacts are provided by residues 10–15 and 79–81; these read SMYGHI and TRF. Position 12 (tyrosine 12) interacts with NAD(+). Residue tryptophan 99 participates in substrate binding. FMN contacts are provided by residues 114–119 and histidine 134; that span reads STGTGG.

This sequence belongs to the WrbA family. It depends on FMN as a cofactor.

The enzyme catalyses a quinone + NADH + H(+) = a quinol + NAD(+). It carries out the reaction a quinone + NADPH + H(+) = a quinol + NADP(+). This Yersinia pseudotuberculosis serotype O:1b (strain IP 31758) protein is NAD(P)H dehydrogenase (quinone).